Consider the following 349-residue polypeptide: NADH-quinone oxidoreductase subunit H (349 aa).

A run of 8 helical transmembrane segments spans residues 14–34 (LLVWTLLKIIAIVLPMLGCVA), 85–105 (GLFLLAPVLSIGPALAAWAVI), 120–140 (LLYILALTSMGVYGVIIAGWA), 164–184 (MGFALVGVLMVSGSLNLVDIV), 196–216 (ILSWNWIPLFPLFIVYLISGV), 243–263 (GMAFAIFFLAEYANMILVAAL), 285–305 (AGGFFWLAVKMALVLFCFLWF), and 324–344 (VFIPVTLVWILVVGAWMFSPL).

Belongs to the complex I subunit 1 family. In terms of assembly, NDH-1 is composed of 14 different subunits. Subunits NuoA, H, J, K, L, M, N constitute the membrane sector of the complex.

The protein resides in the cell inner membrane. It catalyses the reaction a quinone + NADH + 5 H(+)(in) = a quinol + NAD(+) + 4 H(+)(out). In terms of biological role, NDH-1 shuttles electrons from NADH, via FMN and iron-sulfur (Fe-S) centers, to quinones in the respiratory chain. The immediate electron acceptor for the enzyme in this species is believed to be ubiquinone. Couples the redox reaction to proton translocation (for every two electrons transferred, four hydrogen ions are translocated across the cytoplasmic membrane), and thus conserves the redox energy in a proton gradient. This subunit may bind ubiquinone. This chain is NADH-quinone oxidoreductase subunit H, found in Chromobacterium violaceum (strain ATCC 12472 / DSM 30191 / JCM 1249 / CCUG 213 / NBRC 12614 / NCIMB 9131 / NCTC 9757 / MK).